Reading from the N-terminus, the 181-residue chain is Resolvase/recombinase (181 aa).

One can recognise a Resolvase/invertase-type recombinase catalytic domain in the interval 2-137; sequence RLFGYARVST…EGRLEAKAKG (136 aa). Catalysis depends on S10, which acts as the O-(5'-phospho-DNA)-serine intermediate. A DNA-binding region (H-T-H motif) is located at residues 161–180; it reads AMEIAKRLKIGRSTVYKVLA.

Belongs to the site-specific recombinase resolvase family.

Site-specific recombination protein. The chain is Resolvase/recombinase from Pseudomonas putida (Arthrobacter siderocapsulatus).